Here is a 377-residue protein sequence, read N- to C-terminus: tRNA(Met) cytidine acetate ligase (377 aa).

ATP-binding positions include Val7–His20, Gly101, Asn151, and Arg176.

The protein belongs to the TmcAL family.

It localises to the cytoplasm. The catalysed reaction is cytidine(34) in elongator tRNA(Met) + acetate + ATP = N(4)-acetylcytidine(34) in elongator tRNA(Met) + AMP + diphosphate. Its function is as follows. Catalyzes the formation of N(4)-acetylcytidine (ac(4)C) at the wobble position of elongator tRNA(Met), using acetate and ATP as substrates. First activates an acetate ion to form acetyladenylate (Ac-AMP) and then transfers the acetyl group to tRNA to form ac(4)C34. This chain is tRNA(Met) cytidine acetate ligase, found in Limosilactobacillus reuteri (strain DSM 20016) (Lactobacillus reuteri).